Reading from the N-terminus, the 349-residue chain is Hepatic sodium/bile acid cotransporter (349 aa).

The Extracellular portion of the chain corresponds to 1–22 (MEAHNASAPFNFTLPPNFGKRP). Asparagine 5 and asparagine 11 each carry an N-linked (GlcNAc...) asparagine glycan. A helical transmembrane segment spans residues 23–44 (TDLALSVILVFMLFFIMLSLGC). Topologically, residues 45–47 (TME) are cytoplasmic. Residues 48–83 (FSKIKAHLWKPKGLAIALVAQYGIMPLTAFVLGKVF) traverse the membrane as a helical segment. Residues 84 to 86 (RLK) lie on the Extracellular side of the membrane. Residues 87-112 (NIEALAILVCGCSPGGNLSNVFSLAM) traverse the membrane as a discontinuously helical segment. The Cytoplasmic segment spans residues 113–115 (KGD). Residues 116-142 (MNLSIVMTTCSTFCALGMMPLLLYIYS) traverse the membrane as a helical segment. Over 143–156 (RGIYDGDLKDKVPY) the chain is Extracellular. Residues 157–179 (KGIVISLVLVLIPCTIGIVLKSK) traverse the membrane as a helical segment. Topologically, residues 180–183 (RPQY) are cytoplasmic. Residues 184–217 (MRYVIKGGMIIILLCSVAVTVLSAINVGKSIMFA) traverse the membrane as a helical segment. At 218–219 (MT) the chain is on the extracellular side. Residues 220–243 (PLLIATSSLMPFIGFLLGYVLSAL) traverse the membrane as a helical segment. The Cytoplasmic segment spans residues 244-247 (FCLN). Residues 248–273 (GRCRRTVSMETGCQNVQLCSTILNVA) form a discontinuously helical membrane-spanning segment. At 274–280 (FPPEVIG) the chain is on the extracellular side. The chain crosses the membrane as a helical span at residues 281–311 (PLFFFPLLYMIFQLGEGLLLIAIFWCYEKFK). Residues 312-349 (TPKDKTKMIYTAATTEETIPGALGNGTYKGEDCSPCTA) lie on the Cytoplasmic side of the membrane.

This sequence belongs to the bile acid:sodium symporter (BASS) (TC 2.A.28) family. (Microbial infection) Interacts with the myristoylated pre-S1 domain of hepatitis B virus large envelope protein; myristoylation is essential for this interaction. In terms of tissue distribution, expressed in liver. Expressed in placental trophoblasts.

Its subcellular location is the cell membrane. It catalyses the reaction taurocholate(out) + 2 Na(+)(out) = taurocholate(in) + 2 Na(+)(in). The enzyme catalyses cholate(out) + 2 Na(+)(out) = cholate(in) + 2 Na(+)(in). The catalysed reaction is estrone 3-sulfate(out) + 2 Na(+)(out) = estrone 3-sulfate(in) + 2 Na(+)(in). It carries out the reaction taurochenodeoxycholate(out) + 2 Na(+)(out) = taurochenodeoxycholate(in) + 2 Na(+)(in). It catalyses the reaction tauroursodeoxycholate(out) + 2 Na(+)(out) = tauroursodeoxycholate(in) + 2 Na(+)(in). The enzyme catalyses glycocholate(out) + 2 Na(+)(out) = glycocholate(in) + 2 Na(+)(in). The catalysed reaction is tauronorcholate(out) + 2 Na(+)(out) = tauronorcholate(in) + 2 Na(+)(in). It carries out the reaction taurodeoxycholate(out) + 2 Na(+)(out) = taurodeoxycholate(in) + 2 Na(+)(in). It catalyses the reaction tauroallocholate(out) + 2 Na(+)(out) = tauroallocholate(in) + 2 Na(+)(in). The enzyme catalyses taurohyodeoxycholate(out) + 2 Na(+)(out) = taurohyodeoxycholate(in) + 2 Na(+)(in). The catalysed reaction is taurohyocholate(out) + 2 Na(+)(out) = taurohyocholate(in) + 2 Na(+)(in). It carries out the reaction tauro-beta-muricholate(out) + 2 Na(+)(out) = tauro-beta-muricholate(in) + 2 Na(+)(in). Its activity is regulated as follows. The transport of bile acids is sodium-dependent. In terms of biological role, as a major transporter of conjugated bile salts from plasma into the hepatocyte, it plays a key role in the enterohepatic circulation of bile salts necessary for the solubilization and absorption of dietary fat and fat-soluble vitamins. It is strictly dependent on the extracellular presence of sodium. It exhibits broad substrate specificity and transports various bile acids, such as taurocholate, cholate, as well as non-bile acid organic compounds, such as estrone sulfate. Works collaboratively with the ileal transporter (NTCP2), the organic solute transporter (OST), and the bile salt export pump (BSEP), to ensure efficacious biological recycling of bile acids during enterohepatic circulation. Its function is as follows. (Microbial infection) Acts as an entry receptor for hepatitis B virus (HBV). The recognition for human SLC10A1/NTCP is highly specific. This Homo sapiens (Human) protein is Hepatic sodium/bile acid cotransporter (SLC10A1).